The primary structure comprises 428 residues: MPLHRVEALGEPQDRTGKTFSGRTNGPISSPLTDTERRMSIPQNPAPVNLVGLSREEIAALLRDMGEKPFRAKQLWHWVYHRGETDFSAMTTLGTPLRAKLAETCVVARPHVVREQRSEDGTRKWLLRFPDGNEAETVYIPEDDRGALCVSSQVGCTLTCRFCHTGTQLLVRNLTAHEIVGQFMAARDAYGEWPSPTDESRQLSNIVLMGMGEPLYNYDNVAKAIGILLDNEGIAVSRRRITLSTSGVVPMIRRCGAELGVNLAVSLHAARDEIRDEIMPINRKYPLAELMAACREYPGASNARRITFEYVMLKGVNDSEADARALIKLVEGVPCKFNLIPFNPWPGSGFECPPIRHIERFANILFEAGYTAPIRMPRGRDILAACGQLRSDSLRERASLHKARLAAGVADDHAPAAAPLADTPGAVA.

Residues 1-17 show a composition bias toward basic and acidic residues; it reads MPLHRVEALGEPQDRTG. Positions 1–44 are disordered; the sequence is MPLHRVEALGEPQDRTGKTFSGRTNGPISSPLTDTERRMSIPQN. A compositionally biased stretch (polar residues) spans 18–33; the sequence is KTFSGRTNGPISSPLT. E136 functions as the Proton acceptor in the catalytic mechanism. A Radical SAM core domain is found at 142–381; the sequence is EDDRGALCVS…APIRMPRGRD (240 aa). A disulfide bridge connects residues C149 and C386. [4Fe-4S] cluster is bound by residues C156, C160, and C163. S-adenosyl-L-methionine is bound by residues 212-213, S244, 266-268, and N343; these read GE and SLH. C386 acts as the S-methylcysteine intermediate in catalysis.

The protein belongs to the radical SAM superfamily. RlmN family. It depends on [4Fe-4S] cluster as a cofactor.

The protein localises to the cytoplasm. The catalysed reaction is adenosine(2503) in 23S rRNA + 2 reduced [2Fe-2S]-[ferredoxin] + 2 S-adenosyl-L-methionine = 2-methyladenosine(2503) in 23S rRNA + 5'-deoxyadenosine + L-methionine + 2 oxidized [2Fe-2S]-[ferredoxin] + S-adenosyl-L-homocysteine. It catalyses the reaction adenosine(37) in tRNA + 2 reduced [2Fe-2S]-[ferredoxin] + 2 S-adenosyl-L-methionine = 2-methyladenosine(37) in tRNA + 5'-deoxyadenosine + L-methionine + 2 oxidized [2Fe-2S]-[ferredoxin] + S-adenosyl-L-homocysteine. Its function is as follows. Specifically methylates position 2 of adenine 2503 in 23S rRNA and position 2 of adenine 37 in tRNAs. m2A2503 modification seems to play a crucial role in the proofreading step occurring at the peptidyl transferase center and thus would serve to optimize ribosomal fidelity. The chain is Dual-specificity RNA methyltransferase RlmN from Rhodospirillum rubrum (strain ATCC 11170 / ATH 1.1.1 / DSM 467 / LMG 4362 / NCIMB 8255 / S1).